An 82-amino-acid chain; its full sequence is Putative Fe(2+) transport protein A (82 aa).

This sequence belongs to the FeoA family.

Functionally, might be involved in Fe(2+) ion uptake. This chain is Putative Fe(2+) transport protein A, found in Leptolyngbya boryana (Plectonema boryanum).